Consider the following 555-residue polypeptide: Dihydroxy-acid dehydratase (555 aa).

Residue Asp-78 participates in Mg(2+) binding. Cys-119 is a binding site for [2Fe-2S] cluster. Mg(2+)-binding residues include Asp-120 and Lys-121. Lys-121 carries the N6-carboxylysine modification. A [2Fe-2S] cluster-binding site is contributed by Cys-191. Residue Glu-444 coordinates Mg(2+). The active-site Proton acceptor is Ser-470.

The protein belongs to the IlvD/Edd family. As to quaternary structure, homodimer. [2Fe-2S] cluster serves as cofactor. The cofactor is Mg(2+).

The catalysed reaction is (2R)-2,3-dihydroxy-3-methylbutanoate = 3-methyl-2-oxobutanoate + H2O. The enzyme catalyses (2R,3R)-2,3-dihydroxy-3-methylpentanoate = (S)-3-methyl-2-oxopentanoate + H2O. It functions in the pathway amino-acid biosynthesis; L-isoleucine biosynthesis; L-isoleucine from 2-oxobutanoate: step 3/4. It participates in amino-acid biosynthesis; L-valine biosynthesis; L-valine from pyruvate: step 3/4. In terms of biological role, functions in the biosynthesis of branched-chain amino acids. Catalyzes the dehydration of (2R,3R)-2,3-dihydroxy-3-methylpentanoate (2,3-dihydroxy-3-methylvalerate) into 2-oxo-3-methylpentanoate (2-oxo-3-methylvalerate) and of (2R)-2,3-dihydroxy-3-methylbutanoate (2,3-dihydroxyisovalerate) into 2-oxo-3-methylbutanoate (2-oxoisovalerate), the penultimate precursor to L-isoleucine and L-valine, respectively. The protein is Dihydroxy-acid dehydratase of Nitratidesulfovibrio vulgaris (strain DSM 19637 / Miyazaki F) (Desulfovibrio vulgaris).